Reading from the N-terminus, the 697-residue chain is Elongation factor G 2 (697 aa).

Positions 5-280 (SKYRNIGIFA…AVVDYLPAPD (276 aa)) constitute a tr-type G domain. Residues 14–21 (AHVDAGKT), 78–82 (DTPGH), and 132–135 (NKLD) each bind GTP.

It belongs to the TRAFAC class translation factor GTPase superfamily. Classic translation factor GTPase family. EF-G/EF-2 subfamily.

It is found in the cytoplasm. Its function is as follows. Catalyzes the GTP-dependent ribosomal translocation step during translation elongation. During this step, the ribosome changes from the pre-translocational (PRE) to the post-translocational (POST) state as the newly formed A-site-bound peptidyl-tRNA and P-site-bound deacylated tRNA move to the P and E sites, respectively. Catalyzes the coordinated movement of the two tRNA molecules, the mRNA and conformational changes in the ribosome. This chain is Elongation factor G 2, found in Shewanella denitrificans (strain OS217 / ATCC BAA-1090 / DSM 15013).